The following is a 235-amino-acid chain: Large ribosomal subunit protein uL1 (235 aa).

It belongs to the universal ribosomal protein uL1 family. In terms of assembly, part of the 50S ribosomal subunit.

Binds directly to 23S rRNA. The L1 stalk is quite mobile in the ribosome, and is involved in E site tRNA release. In terms of biological role, protein L1 is also a translational repressor protein, it controls the translation of the L11 operon by binding to its mRNA. The protein is Large ribosomal subunit protein uL1 of Prochlorococcus marinus (strain MIT 9215).